Reading from the N-terminus, the 86-residue chain is Small ribosomal subunit protein bS18 (86 aa).

It belongs to the bacterial ribosomal protein bS18 family. As to quaternary structure, part of the 30S ribosomal subunit. Forms a tight heterodimer with protein bS6.

Functionally, binds as a heterodimer with protein bS6 to the central domain of the 16S rRNA, where it helps stabilize the platform of the 30S subunit. The sequence is that of Small ribosomal subunit protein bS18 from Campylobacter fetus subsp. fetus (strain 82-40).